A 102-amino-acid chain; its full sequence is Citrate lyase acyl carrier protein (102 aa).

At S14 the chain carries O-(phosphoribosyl dephospho-coenzyme A)serine.

Belongs to the CitD family. As to quaternary structure, oligomer with a subunit composition of (alpha,beta,gamma)6.

The protein localises to the cytoplasm. In terms of biological role, covalent carrier of the coenzyme of citrate lyase. This chain is Citrate lyase acyl carrier protein, found in Serratia proteamaculans (strain 568).